The chain runs to 218 residues: Stromal cell-derived factor 2-like protein (218 aa).

The N-terminal stretch at 1–21 (MALGFFCLAIFLYLSLDPDSG) is a signal peptide. MIR domains follow at residues 34–88 (GVEI…VKPV), 96–151 (GDAV…LIIE), and 154–208 (GKTW…AAEG). N-linked (GlcNAc...) asparagine glycosylation occurs at Asn214.

In terms of assembly, interacts with ERDJ3B.

It localises to the endoplasmic reticulum. Its function is as follows. Involved in the endoplasmic reticulum (ER) protein quality control and unfolded protein response. May be involved in the quality control of glycoproteins. Forms a complex in the ER with ERDJ3B and MED37A/BIP1 which is required for the proper accumulation and function of the surface-exposed leucine-rich repeat receptor kinases EFR involved in pathogen-associated molecular pattern (PAMP) triggered immunity. This Arabidopsis thaliana (Mouse-ear cress) protein is Stromal cell-derived factor 2-like protein (SDF2).